The primary structure comprises 248 residues: Indole-3-glycerol phosphate synthase (248 aa).

Belongs to the TrpC family.

It carries out the reaction 1-(2-carboxyphenylamino)-1-deoxy-D-ribulose 5-phosphate + H(+) = (1S,2R)-1-C-(indol-3-yl)glycerol 3-phosphate + CO2 + H2O. It functions in the pathway amino-acid biosynthesis; L-tryptophan biosynthesis; L-tryptophan from chorismate: step 4/5. This is Indole-3-glycerol phosphate synthase from Sulfolobus acidocaldarius (strain ATCC 33909 / DSM 639 / JCM 8929 / NBRC 15157 / NCIMB 11770).